We begin with the raw amino-acid sequence, 388 residues long: LL-diaminopimelate aminotransferase (388 aa).

Residues tyrosine 16 and glycine 41 each contribute to the substrate site. Pyridoxal 5'-phosphate contacts are provided by residues tyrosine 70, 104 to 105 (SK), tyrosine 129, asparagine 179, tyrosine 210, and 239 to 241 (SLS). Substrate contacts are provided by lysine 105, tyrosine 129, and asparagine 179. Lysine 242 is subject to N6-(pyridoxal phosphate)lysine. Arginine 250 is a pyridoxal 5'-phosphate binding site. Arginine 368 lines the substrate pocket.

It belongs to the class-I pyridoxal-phosphate-dependent aminotransferase family. LL-diaminopimelate aminotransferase subfamily. As to quaternary structure, homodimer. It depends on pyridoxal 5'-phosphate as a cofactor.

The enzyme catalyses (2S,6S)-2,6-diaminopimelate + 2-oxoglutarate = (S)-2,3,4,5-tetrahydrodipicolinate + L-glutamate + H2O + H(+). The protein operates within amino-acid biosynthesis; L-lysine biosynthesis via DAP pathway; LL-2,6-diaminopimelate from (S)-tetrahydrodipicolinate (aminotransferase route): step 1/1. Its function is as follows. Involved in the synthesis of meso-diaminopimelate (m-DAP or DL-DAP), required for both lysine and peptidoglycan biosynthesis. Catalyzes the direct conversion of tetrahydrodipicolinate to LL-diaminopimelate. The chain is LL-diaminopimelate aminotransferase from Nitratidesulfovibrio vulgaris (strain ATCC 29579 / DSM 644 / CCUG 34227 / NCIMB 8303 / VKM B-1760 / Hildenborough) (Desulfovibrio vulgaris).